We begin with the raw amino-acid sequence, 347 residues long: Spermidine/putrescine import ATP-binding protein PotA (347 aa).

In terms of domain architecture, ABC transporter spans 6 to 238; it reads LEIRNLSHYY…PKTKFVADFI (233 aa). An ATP-binding site is contributed by 40-47; the sequence is GPSGCGKT.

It belongs to the ABC transporter superfamily. Spermidine/putrescine importer (TC 3.A.1.11.1) family. As to quaternary structure, the complex is composed of two ATP-binding proteins (PotA), two transmembrane proteins (PotB and PotC) and a solute-binding protein (PotD).

Its subcellular location is the cell inner membrane. It carries out the reaction ATP + H2O + polyamine-[polyamine-binding protein]Side 1 = ADP + phosphate + polyamineSide 2 + [polyamine-binding protein]Side 1.. In terms of biological role, part of the ABC transporter complex PotABCD involved in spermidine/putrescine import. Responsible for energy coupling to the transport system. The sequence is that of Spermidine/putrescine import ATP-binding protein PotA from Borrelia garinii subsp. bavariensis (strain ATCC BAA-2496 / DSM 23469 / PBi) (Borreliella bavariensis).